A 309-amino-acid chain; its full sequence is L-arabinose 1-dehydrogenase (NAD(P)(+)) (309 aa).

Residues isoleucine 15 and 37-38 each bind NADP(+); that span reads SR. Lysine 91 (proton donor) is an active-site residue. Aspartate 169 lines the NADP(+) pocket.

This sequence belongs to the Gfo/Idh/MocA family. As to quaternary structure, monomer.

The catalysed reaction is alpha-L-arabinopyanose + NAD(+) = L-arabinono-1,4-lactone + NADH + H(+). It catalyses the reaction alpha-L-arabinopyanose + NADP(+) = L-arabinono-1,4-lactone + NADPH + H(+). The enzyme catalyses D-galactose + NAD(+) = D-galactono-1,4-lactone + NADH + H(+). It carries out the reaction D-galactose + NADP(+) = D-galactono-1,5-lactone + NADPH + H(+). Its pathway is carbohydrate degradation; L-arabinose degradation via L-arabinono-1,4-lactone pathway. In terms of biological role, catalyzes the NAD(P)(+)-dependent conversion of L-arabinose to L-arabino-gamma-lactone. Is involved in a degradation pathway of L-arabinose that allows A.brasilense to grow on L-arabinose as a sole carbon source. Prefers NADP(+) to NAD(+) as electron acceptor. Displays high catalytic efficiency for both L-arabinose and D-galactose in vitro. However, the enzyme appears to be involved in the metabolism of L-arabinose but not D-galactose in vivo. To a lesser extent, is also active on D-talose and D-xylose as substrates in vitro, but not with D-arabinose, D-glucose, D-ribose, L-xylose, L-mannose, L-lyxose, and D-fructose. This chain is L-arabinose 1-dehydrogenase (NAD(P)(+)) (araA), found in Azospirillum brasilense.